The following is a 232-amino-acid chain: Orotidine 5'-phosphate decarboxylase (232 aa).

Substrate-binding positions include aspartate 14, lysine 36, 63 to 72 (DLKFHDIPNT), threonine 122, arginine 183, glutamine 192, glycine 212, and arginine 213. The active-site Proton donor is the lysine 65.

This sequence belongs to the OMP decarboxylase family. Type 1 subfamily. Homodimer.

It carries out the reaction orotidine 5'-phosphate + H(+) = UMP + CO2. It participates in pyrimidine metabolism; UMP biosynthesis via de novo pathway; UMP from orotate: step 2/2. Its function is as follows. Catalyzes the decarboxylation of orotidine 5'-monophosphate (OMP) to uridine 5'-monophosphate (UMP). This chain is Orotidine 5'-phosphate decarboxylase, found in Psychrobacter arcticus (strain DSM 17307 / VKM B-2377 / 273-4).